Here is a 500-residue protein sequence, read N- to C-terminus: Dipeptide and tripeptide permease A (500 aa).

The Cytoplasmic portion of the chain corresponds to 1 to 21 (MSTANQKPTESVSLNAFKQPK). The helical transmembrane segment at 22 to 44 (AFYLIFSIELWERFGYYGLQGIM) threads the bilayer. Over 45–59 (AVYLVKQLGMSEADS) the chain is Periplasmic. The helical transmembrane segment at 60–80 (ITLFSSFSALVYGLVAIGGWL) threads the bilayer. At 81–89 (GDKVLGTKR) the chain is on the cytoplasmic side. The helical transmembrane segment at 90–110 (VIMLGAIVLAIGYALVAWSGH) threads the bilayer. A topological domain (periplasmic) is located at residue D111. Residues 112–132 (AGIVYMGMAAIAVGNGLFKAN) traverse the membrane as a helical segment. At 133-153 (PSSLLSTCYEKNDPRLDGAFT) the chain is on the cytoplasmic side. A helical transmembrane segment spans residues 154 to 174 (MYYMSVNIGSFFSMIATPWLA). The Periplasmic portion of the chain corresponds to 175 to 178 (AKYG). The helical transmembrane segment at 179 to 199 (WSVAFALSVVGLLITIVNFAF) threads the bilayer. The Cytoplasmic portion of the chain corresponds to 200–219 (CQRWVKQYGSKPDFEPINYR). Residues 220-240 (NLLLTIIGVVALIAIATWLLH) form a helical membrane-spanning segment. Residues 241 to 246 (NQEVAR) lie on the Periplasmic side of the membrane. The chain crosses the membrane as a helical span at residues 247–267 (MALGVVAFGIVVIFGKEAFAM). Residues 268–274 (KGAARRK) lie on the Cytoplasmic side of the membrane. The chain crosses the membrane as a helical span at residues 275 to 295 (MIVAFILMLEAIIFFVLYSQM). At 296-320 (PTSLNFFAIRNVEHSILGLAVEPEQ) the chain is on the periplasmic side. The helical transmembrane segment at 321-341 (YQALNPFWIIIGSPILAAIYN) threads the bilayer. The Cytoplasmic segment spans residues 342–352 (KMGDTLPMPTK). Residues 353 to 373 (FAIGMVMCSGAFLILPLGAKF) form a helical membrane-spanning segment. Residues 374 to 378 (ASDAG) are Periplasmic-facing. A helical transmembrane segment spans residues 379–399 (IVSVSWLVASYGLQSIGELMI). Topologically, residues 400 to 414 (SGLGLAMVAQLVPQR) are cytoplasmic. Residues 415–435 (LMGFIMGSWFLTTAGANLIGG) form a helical membrane-spanning segment. At 436–459 (YVAGMMAVPDNVTDPLMSLEVYGR) the chain is on the periplasmic side. Residues 460-480 (VFLQIGVATAVIAVLMLLTAP) form a helical membrane-spanning segment. The Cytoplasmic segment spans residues 481 to 500 (KLHRMTQDDAADKAAKAAVA).

Belongs to the major facilitator superfamily. Proton-dependent oligopeptide transporter (POT/PTR) (TC 2.A.17) family. DtpA subfamily. Monomer. Has a crown-like structure with a diameter of 8 nm and a central density.

It localises to the cell inner membrane. Its function is as follows. Proton-dependent permease that transports di- and tripeptides as well as structurally related peptidomimetics such as aminocephalosporins into the cell. Has a clear preference for dipeptides and tripeptides composed of L-amino acids, and discriminates dipeptides on the basis of the position of charges within the substrate. The sequence is that of Dipeptide and tripeptide permease A (dtpA) from Escherichia coli (strain K12).